We begin with the raw amino-acid sequence, 467 residues long: MSDDTTQIEPAMAQETSPRANTRKVFVKTYGCQMNVYDSQRMADSLAAEGYVATDTPDDADLVLLNTCHIREKASEKLYSALGRLRKMRDARAADGKELTIGVAGCVAQAEGQEILRRAPNVDLVIGPQTYHRLPNALARVRGGEKVVETDYAIEDKFEHLPAPRREETRKRGVSAFLTVQEGCDKFCTFCVVPYTRGSEVSRSVKQIVAEAERLADSGVRELTLLGQNVNAWHGEGEDGREWGLGELLFRLARIPGIARLRYTTSHPRDMDDSLIAAHRDLRQLMPYLHLPVQSGSDRILKAMNRRHKADEYLRLIERIRNVRPDMALSGDFIVGFPGETDQDFEDTMQLVRDVNYAQAYSFKYSPRPGTPGADLDDHVEEAVKDERLQRLQALLSAQQYAFQDSMIGRKMDVLLEKPGREAGQMVGRSPWLLPVIIDDNKDRVGDIIHVKIVSTGTNSLIAQKLA.

Residues 1 to 20 (MSDDTTQIEPAMAQETSPRA) are disordered. The region spanning 23-143 (RKVFVKTYGC…LPNALARVRG (121 aa)) is the MTTase N-terminal domain. [4Fe-4S] cluster contacts are provided by C32, C68, C106, C184, C188, and C191. Residues 170 to 402 (RKRGVSAFLT…QALLSAQQYA (233 aa)) enclose the Radical SAM core domain. The region spanning 405 to 467 (DSMIGRKMDV…TNSLIAQKLA (63 aa)) is the TRAM domain.

It belongs to the methylthiotransferase family. MiaB subfamily. Monomer. It depends on [4Fe-4S] cluster as a cofactor.

It is found in the cytoplasm. The enzyme catalyses N(6)-dimethylallyladenosine(37) in tRNA + (sulfur carrier)-SH + AH2 + 2 S-adenosyl-L-methionine = 2-methylsulfanyl-N(6)-dimethylallyladenosine(37) in tRNA + (sulfur carrier)-H + 5'-deoxyadenosine + L-methionine + A + S-adenosyl-L-homocysteine + 2 H(+). Its function is as follows. Catalyzes the methylthiolation of N6-(dimethylallyl)adenosine (i(6)A), leading to the formation of 2-methylthio-N6-(dimethylallyl)adenosine (ms(2)i(6)A) at position 37 in tRNAs that read codons beginning with uridine. The protein is tRNA-2-methylthio-N(6)-dimethylallyladenosine synthase of Brucella abortus (strain S19).